A 425-amino-acid polypeptide reads, in one-letter code: Kynureninase (425 aa).

Residues Leu105, Thr106, 133 to 136 (FPSD), Asp218, His221, and Tyr243 each bind pyridoxal 5'-phosphate. Residue Lys244 is modified to N6-(pyridoxal phosphate)lysine. Residues Trp274 and Asn302 each coordinate pyridoxal 5'-phosphate.

The protein belongs to the kynureninase family. Homodimer. It depends on pyridoxal 5'-phosphate as a cofactor.

It carries out the reaction L-kynurenine + H2O = anthranilate + L-alanine + H(+). The enzyme catalyses 3-hydroxy-L-kynurenine + H2O = 3-hydroxyanthranilate + L-alanine + H(+). Its pathway is amino-acid degradation; L-kynurenine degradation; L-alanine and anthranilate from L-kynurenine: step 1/1. It participates in cofactor biosynthesis; NAD(+) biosynthesis; quinolinate from L-kynurenine: step 2/3. Its function is as follows. Catalyzes the cleavage of L-kynurenine (L-Kyn) and L-3-hydroxykynurenine (L-3OHKyn) into anthranilic acid (AA) and 3-hydroxyanthranilic acid (3-OHAA), respectively. In Flavobacterium johnsoniae (strain ATCC 17061 / DSM 2064 / JCM 8514 / BCRC 14874 / CCUG 350202 / NBRC 14942 / NCIMB 11054 / UW101) (Cytophaga johnsonae), this protein is Kynureninase.